The following is a 511-amino-acid chain: Activin receptor type-2B (511 aa).

An N-terminal signal peptide occupies residues 1 to 20; it reads MGASVALTFLLLLATFRAGS. At 21–136 the chain is on the extracellular side; it reads GHDEVETREC…KPQPSASVLN (116 aa). A disulfide bond links cysteine 30 and cysteine 61. N-linked (GlcNAc...) asparagine glycans are attached at residues asparagine 43 and asparagine 67. 3 cysteine pairs are disulfide-bonded: cysteine 86/cysteine 105, cysteine 92/cysteine 104, and cysteine 106/cysteine 111. Residues 137–157 form a helical membrane-spanning segment; that stretch reads ILIYSLLPIVGLSMAILLAFW. Over 158–511 the chain is Cytoplasmic; the sequence is MYRHRKPSYG…VDLPPKESSI (354 aa). The Protein kinase domain maps to 189–477; that stretch reads LQLLDIKARG…LSAGCVEERI (289 aa). ATP is bound by residues 195 to 203 and lysine 216; that span reads KARGRFGCV. The Proton acceptor role is filled by aspartate 320.

Belongs to the protein kinase superfamily. TKL Ser/Thr protein kinase family. TGFB receptor subfamily.

It localises to the membrane. It catalyses the reaction L-threonyl-[receptor-protein] + ATP = O-phospho-L-threonyl-[receptor-protein] + ADP + H(+). It carries out the reaction L-seryl-[receptor-protein] + ATP = O-phospho-L-seryl-[receptor-protein] + ADP + H(+). Its function is as follows. Receptor for activin A, activin B and inhibin A. Involved in transmembrane signaling. This is Activin receptor type-2B (acvr2b) from Xenopus laevis (African clawed frog).